Consider the following 120-residue polypeptide: Large ribosomal subunit protein uL24 (120 aa).

The segment at 1–26 (MVRVISSQPRKQRKARYNAPHHMRGS) is disordered. A compositionally biased stretch (basic residues) spans 10-24 (RKQRKARYNAPHHMR).

Belongs to the universal ribosomal protein uL24 family. In terms of assembly, part of the 50S ribosomal subunit.

In terms of biological role, one of two assembly initiator proteins, it binds directly to the 5'-end of the 23S rRNA, where it nucleates assembly of the 50S subunit. Its function is as follows. Located at the polypeptide exit tunnel on the outside of the subunit. The polypeptide is Large ribosomal subunit protein uL24 (Methanospirillum hungatei JF-1 (strain ATCC 27890 / DSM 864 / NBRC 100397 / JF-1)).